Here is a 283-residue protein sequence, read N- to C-terminus: Acetylglutamate kinase (283 aa).

Substrate is bound by residues 63–64 (GG), R85, and N178.

This sequence belongs to the acetylglutamate kinase family. ArgB subfamily.

The protein resides in the cytoplasm. It catalyses the reaction N-acetyl-L-glutamate + ATP = N-acetyl-L-glutamyl 5-phosphate + ADP. The protein operates within amino-acid biosynthesis; L-arginine biosynthesis; N(2)-acetyl-L-ornithine from L-glutamate: step 2/4. In terms of biological role, catalyzes the ATP-dependent phosphorylation of N-acetyl-L-glutamate. The chain is Acetylglutamate kinase from Prochlorococcus marinus (strain AS9601).